The sequence spans 557 residues: GMP synthase [glutamine-hydrolyzing] (557 aa).

The 197-residue stretch at 13–209 folds into the Glutamine amidotransferase type-1 domain; sequence TILTLDFGSQ…AVDICGANPN (197 aa). The active-site Nucleophile is cysteine 89. Residues histidine 183 and glutamate 185 contribute to the active site. The GMPS ATP-PPase domain maps to 210 to 414; the sequence is WTMSKFVDQE…LGIAHELVMR (205 aa). 238 to 244 lines the ATP pocket; that stretch reads SGGVDST. XMP is bound by residues arginine 311, aspartate 476, lysine 549, and glutamate 555.

Homodimer. Mg(2+) is required as a cofactor.

The protein resides in the cytoplasm. Its subcellular location is the cytosol. It carries out the reaction XMP + L-glutamine + ATP + H2O = GMP + L-glutamate + AMP + diphosphate + 2 H(+). It functions in the pathway purine metabolism; GMP biosynthesis; GMP from XMP (L-Gln route): step 1/1. Its activity is regulated as follows. Inhibited by 6-diazo-5-oxo-l-norleucine (DON) and acivicin (ACI). Its function is as follows. Catalyzes the conversion of xanthine monophosphate (XMP) to GMP in the presence of glutamine and ATP through an adenyl-XMP intermediate. In Aspergillus fumigatus (strain ATCC MYA-4609 / CBS 101355 / FGSC A1100 / Af293) (Neosartorya fumigata), this protein is GMP synthase [glutamine-hydrolyzing] (gua1).